Consider the following 298-residue polypeptide: Glutamyl-Q tRNA(Asp) synthetase (298 aa).

L-glutamate-binding positions include 9–13 and Glu45; that span reads RFAPS. Positions 12–22 match the 'HIGH' region motif; that stretch reads PSPSGELHFGS. Zn(2+) is bound by residues Cys101, Cys103, Tyr115, and Cys119. Residues Tyr172 and Arg190 each coordinate L-glutamate. The 'KMSKS' region motif lies at 228 to 232; sequence KLSKQ. Position 231 (Lys231) interacts with ATP.

This sequence belongs to the class-I aminoacyl-tRNA synthetase family. GluQ subfamily. Zn(2+) is required as a cofactor.

In terms of biological role, catalyzes the tRNA-independent activation of glutamate in presence of ATP and the subsequent transfer of glutamate onto a tRNA(Asp). Glutamate is transferred on the 2-amino-5-(4,5-dihydroxy-2-cyclopenten-1-yl) moiety of the queuosine in the wobble position of the QUC anticodon. This Salmonella typhi protein is Glutamyl-Q tRNA(Asp) synthetase.